The sequence spans 419 residues: Queuine tRNA-ribosyltransferase accessory subunit 2 (419 aa).

Zn(2+) is bound by residues Cys-326, Cys-328, Cys-331, and His-357.

Belongs to the queuine tRNA-ribosyltransferase family. QTRT2 subfamily. Heterodimer of a catalytic subunit and an accessory subunit. Zn(2+) serves as cofactor.

Its subcellular location is the cytoplasm. Its function is as follows. Non-catalytic subunit of the queuine tRNA-ribosyltransferase (TGT) that catalyzes the base-exchange of a guanine (G) residue with queuine (Q) at position 34 (anticodon wobble position) in tRNAs with GU(N) anticodons (tRNA-Asp, -Asn, -His and -Tyr), resulting in the hypermodified nucleoside queuosine (7-(((4,5-cis-dihydroxy-2-cyclopenten-1-yl)amino)methyl)-7-deazaguanosine). In Drosophila grimshawi (Hawaiian fruit fly), this protein is Queuine tRNA-ribosyltransferase accessory subunit 2.